A 177-amino-acid chain; its full sequence is Probable inosine/xanthosine triphosphatase (177 aa).

It belongs to the YjjX NTPase family. Homodimer. Mg(2+) is required as a cofactor. Mn(2+) serves as cofactor.

It catalyses the reaction XTP + H2O = XDP + phosphate + H(+). The catalysed reaction is ITP + H2O = IDP + phosphate + H(+). Its function is as follows. Phosphatase that hydrolyzes non-canonical purine nucleotides such as XTP and ITP to their respective diphosphate derivatives. Probably excludes non-canonical purines from DNA/RNA precursor pool, thus preventing their incorporation into DNA/RNA and avoiding chromosomal lesions. This Pyrobaculum arsenaticum (strain DSM 13514 / JCM 11321 / PZ6) protein is Probable inosine/xanthosine triphosphatase.